We begin with the raw amino-acid sequence, 212 residues long: Imidazole glycerol phosphate synthase subunit HisH (212 aa).

The Glutamine amidotransferase type-1 domain maps to 2 to 212 (QTAIIDYGMG…LTMLKNFLNW (211 aa)). Residue cysteine 85 is the Nucleophile of the active site. Catalysis depends on residues histidine 194 and glutamate 196.

In terms of assembly, heterodimer of HisH and HisF.

It localises to the cytoplasm. The enzyme catalyses 5-[(5-phospho-1-deoxy-D-ribulos-1-ylimino)methylamino]-1-(5-phospho-beta-D-ribosyl)imidazole-4-carboxamide + L-glutamine = D-erythro-1-(imidazol-4-yl)glycerol 3-phosphate + 5-amino-1-(5-phospho-beta-D-ribosyl)imidazole-4-carboxamide + L-glutamate + H(+). It carries out the reaction L-glutamine + H2O = L-glutamate + NH4(+). It functions in the pathway amino-acid biosynthesis; L-histidine biosynthesis; L-histidine from 5-phospho-alpha-D-ribose 1-diphosphate: step 5/9. Functionally, IGPS catalyzes the conversion of PRFAR and glutamine to IGP, AICAR and glutamate. The HisH subunit catalyzes the hydrolysis of glutamine to glutamate and ammonia as part of the synthesis of IGP and AICAR. The resulting ammonia molecule is channeled to the active site of HisF. The sequence is that of Imidazole glycerol phosphate synthase subunit HisH from Neisseria gonorrhoeae (strain ATCC 700825 / FA 1090).